The sequence spans 245 residues: MADS-box transcription factor 55 (245 aa).

An MADS-box domain is found at 1 to 61; that stretch reads MARERREIRR…GKLSQFASSN (61 aa). The region spanning 109-199 is the K-box domain; that stretch reads LQLEHSKCSS…RDQMPQVPTA (91 aa). Positions 197–245 are disordered; sequence PTAGLAVPDTENVLTEDGQSSESVMTALNSGSSQDNDDGSDISLKLGLP. Residues 213-224 are compositionally biased toward polar residues; that stretch reads DGQSSESVMTAL.

As to expression, expressed in roots, shoots and developing panicles. Expressed in shoots.

It localises to the nucleus. Functionally, transcription factor that acts as a negative regulator of brassinosteroid signaling. The chain is MADS-box transcription factor 55 (MADS55) from Oryza sativa subsp. japonica (Rice).